The chain runs to 247 residues: MTTLFISDLHLDPARPAITELFLEFLRTQVPGSDALYILGDLFEAWIGDDTPSTAADAVAVALHAVADSGVPVFFMAGNRDFLVGETYAQRAGFRILPDPTVIDLYGHTTLLMHGDLLCTDDTAYQAFRAQTRDPVFQAQFLAQPLAARVAFAQQARAASQARHAELKQGDQSRFETVTDVSPAEVEATFVRYGLDRLIHGHTHRPAIHTLQAGGHTCTRIVLGDWYEQGSVLRVDADGASLEQLAL.

Residues D8, H10, D41, N79, and H114 each contribute to the Mn(2+) site. 79 to 80 (NR) provides a ligand contact to substrate. The substrate site is built by D122, S160, D171, R174, and H202. Mn(2+)-binding residues include H202 and H204.

The protein belongs to the LpxH family. Mn(2+) is required as a cofactor.

It is found in the cell inner membrane. It carries out the reaction UDP-2-N,3-O-bis[(3R)-3-hydroxytetradecanoyl]-alpha-D-glucosamine + H2O = 2-N,3-O-bis[(3R)-3-hydroxytetradecanoyl]-alpha-D-glucosaminyl 1-phosphate + UMP + 2 H(+). It functions in the pathway glycolipid biosynthesis; lipid IV(A) biosynthesis; lipid IV(A) from (3R)-3-hydroxytetradecanoyl-[acyl-carrier-protein] and UDP-N-acetyl-alpha-D-glucosamine: step 4/6. Functionally, hydrolyzes the pyrophosphate bond of UDP-2,3-diacylglucosamine to yield 2,3-diacylglucosamine 1-phosphate (lipid X) and UMP by catalyzing the attack of water at the alpha-P atom. Involved in the biosynthesis of lipid A, a phosphorylated glycolipid that anchors the lipopolysaccharide to the outer membrane of the cell. In Xanthomonas axonopodis pv. citri (strain 306), this protein is UDP-2,3-diacylglucosamine hydrolase.